Here is a 288-residue protein sequence, read N- to C-terminus: HTH-type transcriptional regulator CzcR (288 aa).

Positions 1 to 58 (MELRDLQIFQSVADQGSVSSAAKELNYVQSNVTARIKQLENELKTPLFYRHKRGMTLT) constitute an HTH lysR-type domain. The H-T-H motif DNA-binding region spans 18-37 (VSSAAKELNYVQSNVTARIK).

It belongs to the LysR transcriptional regulatory family.

The protein is HTH-type transcriptional regulator CzcR (czcR) of Bacillus cereus (strain ATCC 10987 / NRS 248).